The primary structure comprises 334 residues: Malate dehydrogenase, cytoplasmic (334 aa).

Residue 11–17 (GAAGQIA) coordinates NAD(+). Substrate is bound by residues R92 and R98. NAD(+) is bound by residues N105, Q112, and 129–131 (VGN). Positions 131 and 162 each coordinate substrate. Residue H187 is the Proton acceptor of the active site.

Belongs to the LDH/MDH superfamily. MDH type 2 family. Homodimer.

It localises to the cytoplasm. It is found in the cytosol. The enzyme catalyses (S)-malate + NAD(+) = oxaloacetate + NADH + H(+). The catalysed reaction is (S)-2-hydroxyglutarate + NAD(+) = 2-oxoglutarate + NADH + H(+). Its function is as follows. Catalyzes the reduction of aromatic alpha-keto acids in the presence of NADH. Plays essential roles in the malate-aspartate shuttle and the tricarboxylic acid cycle, important in mitochondrial NADH supply for oxidative phosphorylation. Catalyzes the reduction of 2-oxoglutarate to 2-hydroxyglutarate, leading to elevated reactive oxygen species (ROS). The sequence is that of Malate dehydrogenase, cytoplasmic (mdh1) from Xenopus laevis (African clawed frog).